The chain runs to 580 residues: Acyl-coenzyme A synthetase ACSM4, mitochondrial (580 aa).

The N-terminal 22 residues, 1-22, are a transit peptide targeting the mitochondrion; it reads MKVLLHCQRLRFIWLAKPAGRH. ATP is bound by residues 229–237, 368–373, Asp-455, Arg-470, and Lys-566; these read TSGTTGSPK and EGYGQT.

This sequence belongs to the ATP-dependent AMP-binding enzyme family. Requires Mg(2+) as cofactor. Mn(2+) is required as a cofactor.

Its subcellular location is the mitochondrion. It catalyses the reaction a medium-chain fatty acid + ATP + CoA = a medium-chain fatty acyl-CoA + AMP + diphosphate. The enzyme catalyses hexanoate + ATP + CoA = hexanoyl-CoA + AMP + diphosphate. The catalysed reaction is octanoate + ATP + CoA = octanoyl-CoA + AMP + diphosphate. It carries out the reaction decanoate + ATP + CoA = decanoyl-CoA + AMP + diphosphate. It catalyses the reaction dodecanoate + ATP + CoA = dodecanoyl-CoA + AMP + diphosphate. Its function is as follows. Catalyzes the activation of fatty acids by CoA to produce an acyl-CoA, the first step in fatty acid metabolism. Capable of activating medium-chain fatty acids with a preference for C6-12 fatty acids. This Mus musculus (Mouse) protein is Acyl-coenzyme A synthetase ACSM4, mitochondrial (Acsm4).